Consider the following 250-residue polypeptide: Pyrroloquinoline-quinone synthase (250 aa).

It belongs to the PqqC family.

The catalysed reaction is 6-(2-amino-2-carboxyethyl)-7,8-dioxo-1,2,3,4,7,8-hexahydroquinoline-2,4-dicarboxylate + 3 O2 = pyrroloquinoline quinone + 2 H2O2 + 2 H2O + H(+). Its pathway is cofactor biosynthesis; pyrroloquinoline quinone biosynthesis. Functionally, ring cyclization and eight-electron oxidation of 3a-(2-amino-2-carboxyethyl)-4,5-dioxo-4,5,6,7,8,9-hexahydroquinoline-7,9-dicarboxylic-acid to PQQ. The sequence is that of Pyrroloquinoline-quinone synthase from Ectopseudomonas mendocina (strain ymp) (Pseudomonas mendocina).